The sequence spans 597 residues: DNA primase (597 aa).

Residues Cys-40, His-43, Cys-61, and Cys-64 each coordinate Zn(2+). A CHC2-type zinc finger spans residues 40–64; it reads CPFHGEKTPSFSVSPEKQIFHCFGC. Positions 262–342 constitute a Toprim domain; sequence QEALLVEGFA…RVKVASLPNG (81 aa). Mg(2+) contacts are provided by Glu-268, Asp-311, and Asp-313. Residues 429–447 show a composition bias toward basic and acidic residues; sequence LSRSQRERTKPREAPDGET. A disordered region spans residues 429-448; sequence LSRSQRERTKPREAPDGETA.

This sequence belongs to the DnaG primase family. Monomer. Interacts with replicative helicase DnaB, as DnaB(6):DnaG(3). A stable complex DnaI(6):DnaB(6):DnaG(3) fragment can be isolated; DnaI and DnaG do not contact each other (DnaI in this complex is derived from B.subtilis). Zn(2+) serves as cofactor. Mg(2+) is required as a cofactor.

It carries out the reaction ssDNA + n NTP = ssDNA/pppN(pN)n-1 hybrid + (n-1) diphosphate.. In terms of biological role, RNA polymerase that catalyzes the synthesis of short RNA molecules used as primers for DNA polymerase during DNA replication. The chain is DNA primase from Geobacillus stearothermophilus (Bacillus stearothermophilus).